A 300-amino-acid chain; its full sequence is Zinc finger CCCH-type antiviral protein 1-like (300 aa).

The residue at position 2 (A2) is an N-acetylalanine. The span at 252 to 263 (NTDNSSPSTEHS) shows a compositional bias: polar residues. The interval 252–300 (NTDNSSPSTEHSQGLEKQGVHAAGAAEAGPLASVPAQSAKKPCPVSCEK) is disordered. Residues 271-283 (VHAAGAAEAGPLA) show a composition bias toward low complexity.

This is Zinc finger CCCH-type antiviral protein 1-like (ZC3HAV1L) from Homo sapiens (Human).